The sequence spans 464 residues: mRNA capping enzyme LEF-4 (464 aa).

An mRNA triphosphatase region spans residues methionine 1–methionine 204. The tract at residues glutamate 205–asparagine 464 is mRNA guanylyltransferase. The N6-GMP-lysine intermediate role is filled by lysine 255.

This sequence belongs to the baculoviridae LEF-4 family. In terms of assembly, interacts with LEF-8, LEF-9, and p47.

The protein resides in the host cytoplasm. The protein localises to the host nucleus. The enzyme catalyses a 5'-end diphospho-ribonucleoside in mRNA + GTP + H(+) = a 5'-end (5'-triphosphoguanosine)-ribonucleoside in mRNA + diphosphate. It carries out the reaction a 5'-end triphospho-ribonucleoside in mRNA + H2O = a 5'-end diphospho-ribonucleoside in mRNA + phosphate + H(+). Component of the viral DNA-dependent RNA polymerase that catalyzes two reactions involved in viral RNA cap formation: an RNA 5'-triphosphatase that hydrolyzes the gamma phosphate of triphosphate-terminated RNA and a guanylyltransferase that reacts with GTP to form a covalent protein-guanylate adduct. Therefore plays an essential role in late and very late gene expression. The chain is mRNA capping enzyme LEF-4 (LEF-4) from Autographa californica nuclear polyhedrosis virus (AcMNPV).